Here is a 181-residue protein sequence, read N- to C-terminus: Ribulose bisphosphate carboxylase small subunit, chloroplastic (181 aa).

The transit peptide at 1-54 (MASSMLSSAAVVTSQLQATMVAPFTGLKSSAAFPVTRKTNTDITSIASNGGRVS) directs the protein to the chloroplast.

It belongs to the RuBisCO small chain family. As to quaternary structure, heterohexadecamer of 8 large and 8 small subunits.

The protein localises to the plastid. It localises to the chloroplast. In terms of biological role, ruBisCO catalyzes two reactions: the carboxylation of D-ribulose 1,5-bisphosphate, the primary event in carbon dioxide fixation, as well as the oxidative fragmentation of the pentose substrate. Both reactions occur simultaneously and in competition at the same active site. Although the small subunit is not catalytic it is essential for maximal activity. The sequence is that of Ribulose bisphosphate carboxylase small subunit, chloroplastic from Raphanus sativus (Radish).